Here is a 262-residue protein sequence, read N- to C-terminus: Acyl-[acyl-carrier-protein]--UDP-N-acetylglucosamine O-acyltransferase (262 aa).

This sequence belongs to the transferase hexapeptide repeat family. LpxA subfamily. As to quaternary structure, homotrimer.

The protein localises to the cytoplasm. It catalyses the reaction a (3R)-hydroxyacyl-[ACP] + UDP-N-acetyl-alpha-D-glucosamine = a UDP-3-O-[(3R)-3-hydroxyacyl]-N-acetyl-alpha-D-glucosamine + holo-[ACP]. It participates in glycolipid biosynthesis; lipid IV(A) biosynthesis; lipid IV(A) from (3R)-3-hydroxytetradecanoyl-[acyl-carrier-protein] and UDP-N-acetyl-alpha-D-glucosamine: step 1/6. Involved in the biosynthesis of lipid A, a phosphorylated glycolipid that anchors the lipopolysaccharide to the outer membrane of the cell. The polypeptide is Acyl-[acyl-carrier-protein]--UDP-N-acetylglucosamine O-acyltransferase (Salmonella paratyphi B (strain ATCC BAA-1250 / SPB7)).